The following is a 229-amino-acid chain: Large ribosomal subunit protein uL1 (229 aa).

Belongs to the universal ribosomal protein uL1 family. Part of the 50S ribosomal subunit.

In terms of biological role, binds directly to 23S rRNA. The L1 stalk is quite mobile in the ribosome, and is involved in E site tRNA release. Its function is as follows. Protein L1 is also a translational repressor protein, it controls the translation of the L11 operon by binding to its mRNA. The chain is Large ribosomal subunit protein uL1 from Leifsonia xyli subsp. xyli (strain CTCB07).